The chain runs to 457 residues: Cell division protein FtsZ (457 aa).

Residues 26–30, 115–117, Glu146, Lys150, and Asp193 each bind GTP; these read GGGGN and GTG. Basic and acidic residues predominate over residues 429–447; sequence KKDVVRSEESERPAFESER. Residues 429–457 form a disordered region; that stretch reads KKDVVRSEESERPAFESERSSSPTTISFN. Residues 448–457 show a composition bias toward polar residues; the sequence is SSSPTTISFN.

The protein belongs to the FtsZ family. In terms of assembly, homodimer. Polymerizes to form a dynamic ring structure in a strictly GTP-dependent manner. Interacts directly with several other division proteins.

It is found in the cytoplasm. Its function is as follows. Essential cell division protein that forms a contractile ring structure (Z ring) at the future cell division site. The regulation of the ring assembly controls the timing and the location of cell division. One of the functions of the FtsZ ring is to recruit other cell division proteins to the septum to produce a new cell wall between the dividing cells. Binds GTP and shows GTPase activity. In Porphyromonas gingivalis (strain ATCC BAA-308 / W83), this protein is Cell division protein FtsZ.